Consider the following 99-residue polypeptide: Large ribosomal subunit protein bL28 (99 aa).

Residues methionine 1 to serine 25 are disordered. A compositionally biased stretch (polar residues) spans glycine 11–asparagine 22.

It belongs to the bacterial ribosomal protein bL28 family.

This is Large ribosomal subunit protein bL28 from Rhodospirillum centenum (strain ATCC 51521 / SW).